The sequence spans 444 residues: 23S rRNA (uracil(1939)-C(5))-methyltransferase RlmD (444 aa).

A TRAM domain is found at 5–67 (RNRLDRTPFQ…RHFDEAKTVG (63 aa)). [4Fe-4S] cluster-binding residues include Cys-80, Cys-86, Cys-89, and Cys-168. S-adenosyl-L-methionine contacts are provided by Gln-276, Phe-305, Asn-310, Glu-326, Asp-353, and Asp-374. Cys-400 functions as the Nucleophile in the catalytic mechanism.

This sequence belongs to the class I-like SAM-binding methyltransferase superfamily. RNA M5U methyltransferase family. RlmD subfamily.

The catalysed reaction is uridine(1939) in 23S rRNA + S-adenosyl-L-methionine = 5-methyluridine(1939) in 23S rRNA + S-adenosyl-L-homocysteine + H(+). Catalyzes the formation of 5-methyl-uridine at position 1939 (m5U1939) in 23S rRNA. This Xanthomonas axonopodis pv. citri (strain 306) protein is 23S rRNA (uracil(1939)-C(5))-methyltransferase RlmD.